The following is a 158-amino-acid chain: C-type lection lectoxin-Enh3 (158 aa).

An N-terminal signal peptide occupies residues 1-23 (MGQFTVVSLGLLAMFLSLSGAKG). 3 disulfide bridges follow: Cys26–Cys37, Cys54–Cys154, and Cys129–Cys146. The C-type lectin domain occupies 33-155 (RNGVCNKLFP…CASLHPFICQ (123 aa)). Positions 119–121 (EPN) match the Mannose-binding motif. Ca(2+) contacts are provided by Glu127, Asn142, and Asp143.

This sequence belongs to the true venom lectin family. Expressed by the venom gland.

It is found in the secreted. Its function is as follows. Mannose-binding lectin which recognizes specific carbohydrate structures and agglutinates a variety of animal cells by binding to cell-surface glycoproteins and glycolipids. May be a calcium-dependent lectin. This Pseudoferania polylepis (Macleay's water snake) protein is C-type lection lectoxin-Enh3.